A 1079-amino-acid polypeptide reads, in one-letter code: Electrogenic sodium bicarbonate cotransporter 1 (1079 aa).

The interval 1–62 is required for interaction with AHCYL1; the sequence is MEDEAVLDRG…EKKEKERISE (62 aa). At 1 to 466 the chain is on the cytoplasmic side; the sequence is MEDEAVLDRG…FASDFYDALN (466 aa). E21 carries the post-translational modification Phosphoserine. A Phosphotyrosine modification is found at Y30. Positions 39–52 are enriched in basic residues; sequence YRRRRRHKRKAGHK. The tract at residues 39–78 is disordered; sequence YRRRRRHKRKAGHKEKKEKERISENYSDKSDVENADESSS. Positions 53-70 are enriched in basic and acidic residues; that stretch reads EKKEKERISENYSDKSDV. Residues S61, S65, S68, S223, S232, S233, and S245 each carry the phosphoserine modification. The interval 235 to 266 is disordered; that stretch reads SRMFSNPDNGSPAMTHRNLTSSSLNDISDKPE. Residues T249 and T254 each carry the phosphothreonine modification. Residues 251-260 show a composition bias toward polar residues; the sequence is RNLTSSSLND. Phosphoserine is present on residues S256, S257, and S262. A helical transmembrane segment spans residues 467–491; that stretch reads IQALSAILFIYLATVTNAITFGGLL. Residues 492 to 501 are Extracellular-facing; the sequence is GDATDNMQGV. A helical membrane pass occupies residues 502 to 520; that stretch reads LESFLGTAVSGAIFCLFAG. Q521 is a topological domain (cytoplasmic). The discontinuously helical transmembrane segment at 522 to 542 threads the bilayer; sequence PLTILSSTGPVLVFERLLFNF. The Extracellular portion of the chain corresponds to 543–550; sequence SKDHNFDY. A helical membrane pass occupies residues 551-571; that stretch reads LEFRLWIGLWSAFMCLVLVAT. Over 572–585 the chain is Cytoplasmic; it reads DASFLVQYFTRFTE. The helical transmembrane segment at 586 to 609 threads the bilayer; that stretch reads EGFSSLISFIFIYDAFKKMIKLAD. Residues 610 to 692 are Extracellular-facing; that stretch reads YYPINSDFKV…GNNCDFVPDI (83 aa). Residues 693 to 710 traverse the membrane as a helical segment; sequence TLMSFILFLGTYTSSMAM. Residues 711–725 are Cytoplasmic-facing; the sequence is KKFKTSRYFPTTARK. A helical membrane pass occupies residues 726-745; the sequence is LISDFAIILSILIFCVIDAL. Residues 746-779 lie on the Extracellular side of the membrane; it reads VGVDTPKLIVPSEFKPTSPNRGWFVPPFGGNPWW. Residues 748-779 are interaction with CA4; sequence VDTPKLIVPSEFKPTSPNRGWFVPPFGGNPWW. The helical transmembrane segment at 780–807 threads the bilayer; that stretch reads VCLAAAIPALLVTILIFMDQQITAVIVN. Over 808 to 819 the chain is Cytoplasmic; it reads RKEHKLKKGAGY. Residues 820–836 form a helical membrane-spanning segment; it reads HLDLFWVAILMVVCSFM. Position 837 (A837) is a topological domain, extracellular. The chain crosses the membrane as a discontinuously helical span at residues 838-855; it reads LPWYVAATVISIAHIDSL. Topologically, residues 856-877 are cytoplasmic; that stretch reads KMETETSAPGEQPKFLGVREQR. Residues 878 to 894 form a helical membrane-spanning segment; sequence VTGTLVFILTGLSVFMA. Over 895–901 the chain is Extracellular; the sequence is PILKFIP. A helical transmembrane segment spans residues 902–918; the sequence is MPVLYGVFLYMGVASLN. The Cytoplasmic portion of the chain corresponds to 919 to 960; the sequence is GVQFMDRLKLLLMPLKHQPDFIYLRHVPLRRVHLFTFLQVLC. Positions 961 to 986 form an intramembrane region, discontinuously helical; that stretch reads LALLWILKSTVAAIIFPVMILALVAV. The Cytoplasmic portion of the chain corresponds to 987–1079; that stretch reads RKGMDYLFSQ…STFLERHTSC (93 aa). The tract at residues 1002-1004 is CA2-binding; the sequence is LDD. The segment at 1012–1079 is disordered; the sequence is KKKEDEKKKK…STFLERHTSC (68 aa). Residues S1026 and S1029 each carry the phosphoserine modification. A CA2-binding region spans residues 1030 to 1033; it reads DNDD. 2 positions are modified to phosphoserine: S1034 and S1044. The interval 1057–1059 is required for basolateral targeting; that stretch reads FLS. Over residues 1062-1079 the composition is skewed to basic and acidic residues; the sequence is KPLDRERSSTFLERHTSC. Position 1069 is a phosphoserine (S1069).

It belongs to the anion exchanger (TC 2.A.31) family. As to quaternary structure, homodimer. Interacts with CA2/carbonic anhydrase 2 and CA4/carbonic anhydrase 4 which may regulate transporter activity. Isoform 1 but not isoform 2 interacts with AHCYL1 (via PEST domain when phosphorylated); the interaction increases SLC4A4 isoform 1 activity. Interacts with AHCYL2. Phosphorylation of Ser-1026 by PKA increases the binding of CA2 and changes the Na(+):HCO3(-) stoichiometry of the transporter from 3:1 to 2:1. Phosphorylated in presence of STK39 and dephosphorylated in presence of PP1 phosphatase; phosphorylation seems to inhibit SLC4A4 activity. Post-translationally, N-glycosylated. May not be necessary for the transporter basic functions. As to expression, isoform 1 is specifically expressed in pancreatic ducts and acini. Also expressed in parotid acinar cells and in the colonic crypts.

The protein resides in the basolateral cell membrane. The protein localises to the cell membrane. It catalyses the reaction 2 hydrogencarbonate(out) + Na(+)(out) = 2 hydrogencarbonate(in) + Na(+)(in). The enzyme catalyses 3 hydrogencarbonate(out) + Na(+)(out) = 3 hydrogencarbonate(in) + Na(+)(in). Its activity is regulated as follows. Activated by cyclic AMP. Electrogenic sodium/bicarbonate cotransporter with a Na(+):HCO3(-) stoichiometry varying from 1:2 to 1:3. May regulate bicarbonate influx/efflux at the basolateral membrane of cells and regulate intracellular pH. This chain is Electrogenic sodium bicarbonate cotransporter 1 (Slc4a4), found in Mus musculus (Mouse).